We begin with the raw amino-acid sequence, 89 residues long: DNA/RNA-binding protein Alba 2 (89 aa).

At K12 the chain carries N6-acetyllysine.

This sequence belongs to the histone-like Alba family. Acetylated. Acetylation at Lys-12 decreases DNA-binding affinity.

It localises to the cytoplasm. Its subcellular location is the chromosome. Binds double-stranded DNA tightly but without sequence specificity. Involved in DNA compaction. The chain is DNA/RNA-binding protein Alba 2 from Saccharolobus shibatae (strain ATCC 51178 / DSM 5389 / JCM 8931 / NBRC 15437 / B12) (Sulfolobus shibatae).